The following is a 257-amino-acid chain: Type III pantothenate kinase (257 aa).

An ATP-binding site is contributed by 11-18 (DSGNTAIK). Substrate is bound by residues Tyr96 and 103–106 (GCDR). Asp105 serves as the catalytic Proton acceptor. Asp125 provides a ligand contact to K(+). Residue Thr128 coordinates ATP. Position 179 (Thr179) interacts with substrate.

This sequence belongs to the type III pantothenate kinase family. In terms of assembly, homodimer. Requires NH4(+) as cofactor. K(+) is required as a cofactor.

It is found in the cytoplasm. The catalysed reaction is (R)-pantothenate + ATP = (R)-4'-phosphopantothenate + ADP + H(+). It participates in cofactor biosynthesis; coenzyme A biosynthesis; CoA from (R)-pantothenate: step 1/5. In terms of biological role, catalyzes the phosphorylation of pantothenate (Pan), the first step in CoA biosynthesis. The chain is Type III pantothenate kinase from Nitrosomonas eutropha (strain DSM 101675 / C91 / Nm57).